Consider the following 315-residue polypeptide: MAFMKQRSKTMRNLEKYKGVIPAFYACYDKEGNISPEGVQGLTKYFVKKGVKGVYVNGSSGECIYQSVEDRKIVLENVMKVAEGKLTVIAHVACNNTKDSQELARHAEGLGVDAIAAIPPIYFHLPEYAIAQYWNAISAAAPNTDFVIYNIPQLAGVALTQNLFVEMRKNPNVIGVKNSSMPVQDIQMFKQAAGAEYIIFNGPDEQFMSGRVIGAEGAIGGTYGAMPELYLKLDECINAGKMTEARKIQYACNEIIYKMCSAHGNMYAVIKAILKINEGLELGAVREPLPALVDEDMEIVKEAAQMICDAKKKFL.

Aceneuramate is bound by residues Ser-59 and Ser-60. Tyr-149 functions as the Proton donor in the catalytic mechanism. Lys-177 acts as the Schiff-base intermediate with substrate in catalysis. Aceneuramate contacts are provided by Ser-179, Gly-202, Asp-204, Glu-205, and Gly-221.

It belongs to the DapA family. NanA subfamily. As to quaternary structure, homotetramer.

It localises to the cytoplasm. It catalyses the reaction aceneuramate = aldehydo-N-acetyl-D-mannosamine + pyruvate. The protein operates within amino-sugar metabolism; N-acetylneuraminate degradation; D-fructose 6-phosphate from N-acetylneuraminate: step 1/5. In terms of biological role, catalyzes the reversible aldol cleavage of N-acetylneuraminic acid (sialic acid; Neu5Ac) to form pyruvate and N-acetylmannosamine (ManNAc) via a Schiff base intermediate. Cannot use 2,7-anhydro-Neu5Ac. Involved in the degradation of sialic acid, which is present in the host mucus layer and represents a much-coveted source of nutrients for R.gnavus, a prevalent member of the normal gut microbiota. In Mediterraneibacter gnavus (strain ATCC 29149 / DSM 114966 / JCM 6515 / VPI C7-9) (Ruminococcus gnavus), this protein is N-acetylneuraminate lyase.